The sequence spans 687 residues: Polyphosphate kinase (687 aa).

An ATP-binding site is contributed by N45. Positions 375 and 405 each coordinate Mg(2+). H435 functions as the Phosphohistidine intermediate in the catalytic mechanism. 3 residues coordinate ATP: Y472, R568, and H596.

It belongs to the polyphosphate kinase 1 (PPK1) family. It depends on Mg(2+) as a cofactor. In terms of processing, an intermediate of this reaction is the autophosphorylated ppk in which a phosphate is covalently linked to a histidine residue through a N-P bond.

The catalysed reaction is [phosphate](n) + ATP = [phosphate](n+1) + ADP. Its function is as follows. Catalyzes the reversible transfer of the terminal phosphate of ATP to form a long-chain polyphosphate (polyP). The polypeptide is Polyphosphate kinase (Burkholderia ambifaria (strain MC40-6)).